The sequence spans 148 residues: Large ribosomal subunit protein bL9 (148 aa).

This sequence belongs to the bacterial ribosomal protein bL9 family.

In terms of biological role, binds to the 23S rRNA. This is Large ribosomal subunit protein bL9 from Salinispora tropica (strain ATCC BAA-916 / DSM 44818 / JCM 13857 / NBRC 105044 / CNB-440).